Consider the following 572-residue polypeptide: Glypican-5 (572 aa).

The N-terminal stretch at 1–24 (MDAQTWPVGFRCLLLLALVGSARS) is a signal peptide. N120 and N237 each carry an N-linked (GlcNAc...) asparagine glycan. The interval 355–375 (SPRCSFDQSKEKHGMKTTTRN) is disordered. 5 O-linked (Xyl...) (glycosaminoglycan) serine glycosylation sites follow: S441, S486, S495, S507, and S509. N527 carries an N-linked (GlcNAc...) asparagine glycan.

This sequence belongs to the glypican family. In terms of tissue distribution, in adult, primarily expressed in the brain. Also detected in fetal brain, lung and liver.

The protein resides in the cell membrane. It is found in the secreted. Its subcellular location is the extracellular space. Functionally, cell surface proteoglycan that bears heparan sulfate. In Homo sapiens (Human), this protein is Glypican-5 (GPC5).